Reading from the N-terminus, the 406-residue chain is MAAAVRQDLAQLMNSSGSHKDLAGKYRQILEKAIQLSGAEQLEALKAFVEAMVNENVSLVISRQLLTDFCTHLPNLPDSTAKEIYHFTLEKIQPRVISFEEQVASIRQHLASIYEKEEDWRNAAQVLVGIPLETGQKQYNVDYKLETYLKIARLYLEDDDPVQAEAYINRASLLQNESTNEQLQIHYKVCYARVLDYRRKFIEAAQRYNELSYKTIVHESERLEALKHALHCTILASAGQQRSRMLATLFKDERCQQLAAYGILEKMYLDRIIRGNQLQEFAAMLMPHQKATTADGSSILDRAVIEHNLLSASKLYNNITFEELGALLEIPAAKAEKIASQMITEGRMNGFIDQIDGIVHFETREALPTWDKQIQSLCFQVNNLLEKISQTAPEWTAQAMEAQMAQ.

A2 carries the N-acetylalanine modification. The residue at position 25 (K25) is an N6-acetyllysine. The 170-residue stretch at 197 to 366 (YRRKFIEAAQ…GIVHFETREA (170 aa)) folds into the PCI domain.

It belongs to the CSN4 family. In terms of assembly, component of the CSN complex, composed of COPS1/GPS1, COPS2, COPS3, COPS4, COPS5, COPS6, COPS7 (COPS7A or COPS7B), COPS8 and COPS9 isoform 1. In the complex, it probably interacts directly with COPS1, COPS2, COPS3, COPS5, COPS6, COPS7 (COPS7A or COPS7B) and COPS8. Interacts with TOR1A; the interaction is direct and associates TOR1A and SNAPIN with the CSN complex. Interacts with STON2; controls STON2 neddylation levels. Interacts with ERCC6.

The protein localises to the cytoplasm. The protein resides in the nucleus. Its subcellular location is the cytoplasmic vesicle. It is found in the secretory vesicle. It localises to the synaptic vesicle. Component of the COP9 signalosome complex (CSN), a complex involved in various cellular and developmental processes. The CSN complex is an essential regulator of the ubiquitin (Ubl) conjugation pathway by mediating the deneddylation of the cullin subunits of SCF-type E3 ligase complexes, leading to decrease the Ubl ligase activity of SCF-type complexes such as SCF, CSA or DDB2. Also involved in the deneddylation of non-cullin subunits such as STON2. The complex is also involved in phosphorylation of p53/TP53, c-jun/JUN, IkappaBalpha/NFKBIA, ITPK1, IRF8/ICSBP and SNAPIN, possibly via its association with CK2 and PKD kinases. CSN-dependent phosphorylation of TP53 and JUN promotes and protects degradation by the Ubl system, respectively. The polypeptide is COP9 signalosome complex subunit 4 (COPS4) (Homo sapiens (Human)).